The sequence spans 1242 residues: DNA polymerase catalytic subunit (1242 aa).

4 disordered regions span residues 14–38 (GAVA…RPPQ), 644–665 (LQSA…SSSS), 877–898 (EGDS…GGSN), and 1108–1163 (TAPQ…KPPS). Residues 653-665 (GVSPGSGSNSSSS) are compositionally biased toward low complexity. The segment covering 1110 to 1119 (PQGSSDNGDS) has biased composition (polar residues). A compositionally biased stretch (basic and acidic residues) spans 1145–1155 (ESNRRGGEPAK).

This sequence belongs to the DNA polymerase type-B family. In terms of assembly, forms a complex with the ssDNA-binding protein UL57, the DNA polymerase processivity factor UL44, and the alkaline exonuclease UL98. Interacts with the putative helicase-primase complex composed of UL70, UL102 and UL105 proteins; these interactions may coordinate leading and lagging strand DNA synthesis at the replication fork.

The protein resides in the host nucleus. It catalyses the reaction DNA(n) + a 2'-deoxyribonucleoside 5'-triphosphate = DNA(n+1) + diphosphate. Replicates viral genomic DNA in the late phase of lytic infection, producing long concatemeric DNA. The replication complex is composed of six viral proteins: the DNA polymerase, processivity factor, primase, primase-associated factor, helicase, and ssDNA-binding protein. The sequence is that of DNA polymerase catalytic subunit (UL54) from Homo sapiens (Human).